The sequence spans 177 residues: Parathyroid hormone-related protein (177 aa).

The signal sequence occupies residues 1–24; that stretch reads MLWRLVQQWSVAVFLLSYSVPSCG. The propeptide occupies 25 to 34; that stretch reads RSVEELGRRL. An important for receptor binding region spans residues 57–68; that stretch reads RFFLHHLIAEIH. Residues 74–149 are disordered; it reads ATSEVSPNSK…KRRTRSAWLT (76 aa). Positions 76 to 90 are enriched in polar residues; the sequence is SEVSPNSKPAPNTKN. Residues 108-129 carry the Nuclear localization signal motif; that stretch reads TNKVETYKEQPLKTPGKKKKSK. Positions 109 to 118 are enriched in basic and acidic residues; sequence NKVETYKEQP. A compositionally biased stretch (basic residues) spans 122 to 132; the sequence is PGKKKKSKPGK.

Belongs to the parathyroid hormone family. In terms of assembly, PTHrP interacts with PTH1R (via N-terminal extracellular domain). In terms of processing, there are several secretory forms, including osteostatin, arising from endoproteolytic cleavage of the initial translation product. Each of these secretory forms is believed to have one or more of its own receptors that mediates the normal paracrine, autocrine and endocrine actions.

It is found in the secreted. The protein resides in the cytoplasm. Its subcellular location is the nucleus. In terms of biological role, neuroendocrine peptide which is a critical regulator of cellular and organ growth, development, migration, differentiation and survival and of epithelial calcium ion transport. Acts by binding to its receptor, PTH1R, activating G protein-coupled receptor signaling. Regulates endochondral bone development and epithelial-mesenchymal interactions during the formation of the mammary glands and teeth. Required for skeletal homeostasis. Promotes mammary mesenchyme differentiation and bud outgrowth by modulating mesenchymal cell responsiveness to BMPs. Up-regulates BMPR1A expression in the mammary mesenchyme and this increases the sensitivity of these cells to BMPs and allows them to respond to BMP4 in a paracrine and/or autocrine fashion. BMP4 signaling in the mesenchyme, in turn, triggers epithelial outgrowth and augments MSX2 expression, which causes the mammary mesenchyme to inhibit hair follicle formation within the nipple sheath. Functionally, potent inhibitor of osteoclastic bone resorption. In Bos taurus (Bovine), this protein is Parathyroid hormone-related protein (PTHLH).